Here is a 479-residue protein sequence, read N- to C-terminus: NAC domain-containing protein 45 (479 aa).

The 152-residue stretch at 6-157 (LPPGFRFHPT…AYALCRVFKK (152 aa)) folds into the NAC domain. The DNA-binding element occupies 105–163 (IGTKKTLVYYRGRAPHGIRTGWVMHEYRLDETECEPSAYGMQDAYALCRVFKKIVIEAK).

In terms of tissue distribution, expressed in a few sieve element cells before enucleation and in phloem-pole pericycle cells.

It is found in the nucleus. Functionally, transcription factor directing sieve element enucleation and cytosol degradation. Not required for formation of lytic vacuoles. Regulates, with NAC086, the transcription of NEN1, NEN2, NEN3, NEN4, RTM1, RTM2, UBP16, PLDZETA, ABCB10 and At1g26450. The polypeptide is NAC domain-containing protein 45 (Arabidopsis thaliana (Mouse-ear cress)).